Here is a 223-residue protein sequence, read N- to C-terminus: MGESIAQQRGPFARRLQEYAASIELTLSEQQVNQLLDYLELFEKWNKAYNLSAIRDAEGMFTKHLLDSLSIAPHLTGERFIDVGTGGGLPGIPMAICFPQRHFTLLDSAGKKVRFLFQVKQALGLSNVDTQNRRVETFQPQPQFDGVISRAFASITYMLTWCNHLIHDDGRFWAMKGVMPNSELSELPKKYIVKASHALHVPNLEGERCLIELALAQESNSKA.

S-adenosyl-L-methionine contacts are provided by residues Gly84, Leu89, 135–136 (VE), and Arg150.

The protein belongs to the methyltransferase superfamily. RNA methyltransferase RsmG family.

It is found in the cytoplasm. The catalysed reaction is guanosine(527) in 16S rRNA + S-adenosyl-L-methionine = N(7)-methylguanosine(527) in 16S rRNA + S-adenosyl-L-homocysteine. Specifically methylates the N7 position of guanine in position 527 of 16S rRNA. In Saccharophagus degradans (strain 2-40 / ATCC 43961 / DSM 17024), this protein is Ribosomal RNA small subunit methyltransferase G.